The chain runs to 954 residues: Glycine dehydrogenase (decarboxylating) (954 aa).

Residue Lys-704 is modified to N6-(pyridoxal phosphate)lysine.

The protein belongs to the GcvP family. As to quaternary structure, the glycine cleavage system is composed of four proteins: P, T, L and H. Pyridoxal 5'-phosphate is required as a cofactor.

It catalyses the reaction N(6)-[(R)-lipoyl]-L-lysyl-[glycine-cleavage complex H protein] + glycine + H(+) = N(6)-[(R)-S(8)-aminomethyldihydrolipoyl]-L-lysyl-[glycine-cleavage complex H protein] + CO2. Functionally, the glycine cleavage system catalyzes the degradation of glycine. The P protein binds the alpha-amino group of glycine through its pyridoxal phosphate cofactor; CO(2) is released and the remaining methylamine moiety is then transferred to the lipoamide cofactor of the H protein. This is Glycine dehydrogenase (decarboxylating) from Vibrio vulnificus (strain CMCP6).